Here is a 353-residue protein sequence, read N- to C-terminus: Quinolinate synthase (353 aa).

Iminosuccinate is bound by residues histidine 47 and serine 68. Cysteine 113 is a binding site for [4Fe-4S] cluster. Residues 139-141 (YAN) and serine 156 contribute to the iminosuccinate site. Cysteine 200 lines the [4Fe-4S] cluster pocket. Iminosuccinate-binding positions include 226–228 (HPE) and threonine 243. [4Fe-4S] cluster is bound at residue cysteine 297.

This sequence belongs to the quinolinate synthase family. Type 1 subfamily. [4Fe-4S] cluster is required as a cofactor.

It is found in the cytoplasm. It carries out the reaction iminosuccinate + dihydroxyacetone phosphate = quinolinate + phosphate + 2 H2O + H(+). The protein operates within cofactor biosynthesis; NAD(+) biosynthesis; quinolinate from iminoaspartate: step 1/1. Its function is as follows. Catalyzes the condensation of iminoaspartate with dihydroxyacetone phosphate to form quinolinate. This chain is Quinolinate synthase, found in Serratia proteamaculans (strain 568).